A 266-amino-acid polypeptide reads, in one-letter code: uncharacterized protein (266 aa).

Disordered regions lie at residues 50 to 116 and 128 to 224; these read GGSR…DFAD and EEER…PTSG. Residues 78 to 90 show a composition bias toward pro residues; that stretch reads APDPPAGNQPPAL. Positions 94 to 108 are enriched in gly residues; the sequence is GDGGNESGAGGGESG. Over residues 129 to 161 the composition is skewed to basic and acidic residues; sequence EERRLQYPRETTKRTETVDERKRERSRSPRRDA. The span at 166–176 shows a compositional bias: low complexity; that stretch reads PRAAPAAAPRA.

This is an uncharacterized protein from Homo sapiens (Human).